Here is a 3744-residue protein sequence, read N- to C-terminus: SAGA complex/NuA4 acetyltransferase complex subunit TRA1 (3744 aa).

Position 2 is an N-acetylserine (serine 2). HEAT repeat units lie at residues 2–40 (SLTE…LLNS), 46–92 (FFLQ…NQTF), 94–131 (PYAM…SFKS), and 135–172 (DKLD…DLDS). An HEAT region spans residues 2 to 2598 (SLTEQIEQFA…KPYHTRQISS (2597 aa)). Position 172 is a phosphoserine (serine 172). The segment covering 185-195 (FSKNDEEKDFP) has biased composition (basic and acidic residues). The interval 185-212 (FSKNDEEKDFPSKQSSTEPRFENSTSSN) is disordered. The span at 196–212 (SKQSSTEPRFENSTSSN) shows a compositional bias: polar residues. HEAT repeat units lie at residues 247-284 (PEFT…ISTE), 319-357 (QDYV…ILST), and 437-477 (KLLL…RFKT). Positions 522–539 (LEPSDDDHLMPQPKKEDI) are enriched in basic and acidic residues. The segment at 522–546 (LEPSDDDHLMPQPKKEDINDSPDVE) is disordered. Residue serine 542 is modified to Phosphoserine. HEAT repeat units follow at residues 588–628 (RTLM…VFSY), 734–771 (PNFA…LSFM), 779–821 (INEV…SIGG), 829–867 (RSIK…TVPV), 870–910 (SVLA…NLTA), 919–958 (PVID…RNRQ), 1074–1112 (NQEN…HFCL), 1188–1225 (SFIP…NVKS), 1283–1320 (KVLE…LTGI), 1369–1408 (TFNE…SEQL), 1435–1472 (NIRI…ENSK), 1476–1512 (ELLQ…LLIA), 1693–1734 (LKLK…RFTE), 1739–1776 (DQNP…SSNK), 1918–1955 (FPIK…VLHE), 2115–2155 (ELGL…LDSE), 2182–2219 (ENLP…AIKA), 2230–2267 (SPGK…FMNF), 2269–2307 (DNIV…ARIT), and 2536–2573 (IISS…SIPK). A head region spans residues 2599–3744 (RTNVINMLLD…RTDVNFMPWF (1146 aa)). In terms of domain architecture, FAT spans 2622-3177 (LVKYLAISYN…HFQLRTTKED (556 aa)). The PI3K/PI4K catalytic domain occupies 3374 to 3732 (FLPTVDFVRG…CIGSAVSPRN (359 aa)). The segment at 3380 to 3386 (FVRGTHS) is G-loop. Positions 3563–3571 (MINNRTPHK) are catalytic loop. Positions 3600–3625 (LKNHDLSLPPDSPIFHNNEPVPFRLT) are activation loop. An FATC domain is found at 3712–3744 (TPTVTTQFILDCIGSAVSPRNLARTDVNFMPWF).

The protein belongs to the PI3/PI4-kinase family. TRA1 subfamily. As to quaternary structure, component of the 1.8 MDa SAGA (Spt-Ada-Gcn5 acetyltransferase) complex, which is composed of 19 subunits TRA1, SPT7, TAF5, NGG1/ADA3, SGF73, SPT20/ADA5, SPT8, TAF12, TAF6, HFI1/ADA1, UBP8, GCN5, ADA2, SPT3, SGF29, TAF10, TAF9, SGF11 and SUS1. The SAGA complex is composed of 4 modules, namely the HAT (histone acetyltransferase) module (GCN5, ADA2, NGG1/ADA3 and SGF29), the DUB (deubiquitinating) module (UBP8, SGF11, SGF73 and SUS1), the core or TAF (TBP-associated factor) module (TAF5, TAF6, TAF9, TAF10 and TAF12), and the Tra1 or SPT (Suppressor of Ty) module (TRA1, HFI1/ADA1, SPT3, SPT7, SPT8 and SPT20/ADA5). The Tra1/SPT module binds activators, the core module recruits TBP (TATA-binding protein), the HAT module contains the histone H3 acetyltransferase GCN5, and the DUB module comprises the histone H2B deubiquitinase UBP8. Also identified in an altered form of SAGA, named SALSA (SAGA altered, Spt8 absent) or SLIK (SAGA-like) complex, which contains a C-terminal truncated form of SPT7 and is missing SPT8. However, it has been shown that the SAGA and SAGA-like SALSA/SLIK transcriptional coactivators are structurally and biochemically equivalent. Component of the NuA4 acetyltransferase complex, which consists of the catalytic subunit ESA1 and the 12 non-catalytic subunits ACT1, ARP4, EAF1/VID21, SWC4/EAF2, EAF3, EAF5, EAF6, EAF7, EPL1, TRA1, YAF9 and YNG2. TRA1 is the scaffold subunit for binding to a variety of transcription activators or transcription factors to recruit NuA4 for targeted gene activation. Identified in the Ada.spt complex with NGG1/ADA3 and SPT7.

It localises to the nucleus. Essential scaffold subunit of the transcription coactivator SAGA complex. SAGA acts as a general cofactor required for essentially all RNA polymerase II transcription. At the promoters, SAGA is required for transcription pre-initiation complex (PIC) recruitment. It influences RNA polymerase II transcriptional activity through different activities such as TBP interaction (via core/TAF module) and promoter selectivity, interaction with transcription activators (via Tra1/SPT module), and chromatin modification through histone acetylation (via HAT module) and deubiquitination (via DUB module). SAGA preferentially acetylates histones H3 (to form H3K9ac, H3K14ac, H3K18ac and H3K23ac) and H2B and deubiquitinates histone H2B. SAGA interacts with DNA via upstream activating sequences (UASs). Also identified in a modified version of SAGA named SALSA or SLIK. The cleavage of SPT7 and the absence of the SPT8 subunit in SLIK neither drive any major conformational differences in its structure compared with SAGA, nor significantly affect HAT, DUB, or DNA-binding activities. Component of the NuA4 histone H4/H2A acetyltransferase involved in transcription and DNA repair. The sequence is that of SAGA complex/NuA4 acetyltransferase complex subunit TRA1 from Saccharomyces cerevisiae (strain ATCC 204508 / S288c) (Baker's yeast).